A 130-amino-acid polypeptide reads, in one-letter code: Fumarate reductase subunit C (130 aa).

The next 3 helical transmembrane spans lie at 34–54, 60–80, and 109–129; these read VPAVWFSIVLIYGVFALKGGV, FVGFLQNPLVLLINFVALLAA, and IVKTLWAVTVVASVVILAVAL.

It belongs to the FrdC family. As to quaternary structure, part of an enzyme complex containing four subunits: a flavoprotein (FrdA), an iron-sulfur protein (FrdB), and two hydrophobic anchor proteins (FrdC and FrdD).

The protein resides in the cell inner membrane. Two distinct, membrane-bound, FAD-containing enzymes are responsible for the catalysis of fumarate and succinate interconversion; fumarate reductase is used in anaerobic growth, and succinate dehydrogenase is used in aerobic growth. Anchors the catalytic components of the fumarate reductase complex to the cell inner membrane, binds quinones. The sequence is that of Fumarate reductase subunit C from Serratia proteamaculans (strain 568).